A 447-amino-acid polypeptide reads, in one-letter code: Glycylpeptide N-tetradecanoyltransferase (447 aa).

Tetradecanoyl-CoA-binding positions include 38-41 (YKFW), 171-173 (LCV), and 179-183 (SKRLA). The active-site Proton acceptor; via carboxylate is the Leu-447.

The protein belongs to the NMT family. As to quaternary structure, monomer.

The protein localises to the cytoplasm. It catalyses the reaction N-terminal glycyl-[protein] + tetradecanoyl-CoA = N-tetradecanoylglycyl-[protein] + CoA + H(+). Its function is as follows. Adds a myristoyl group to the N-terminal glycine residue of certain cellular proteins. The protein is Glycylpeptide N-tetradecanoyltransferase (NMT1) of Kluyveromyces lactis (strain ATCC 8585 / CBS 2359 / DSM 70799 / NBRC 1267 / NRRL Y-1140 / WM37) (Yeast).